A 798-amino-acid polypeptide reads, in one-letter code: Sodium/hydrogen exchanger 4 (798 aa).

At 1–13 (MALQMFVTYSPWN) the chain is on the cytoplasmic side. An intramembrane region (name=A/M1) is located at residues 14 to 28 (CLLLLVALECSEASS). At 29–69 (DLNESANSTAQYASNAWFAAASSEPEEGISVFELDYDYVQI) the chain is on the cytoplasmic side. Residues 70–90 (PYEVTLWILLASLAKIGFHLY) constitute an intramembrane region (name=B/M2). Residues 91-94 (HRLP) are Cytoplasmic-facing. A helical membrane pass occupies residues 95-115 (GLMPESCLLILVGALVGGIIF). Topologically, residues 116 to 127 (GTDHKSPPVMDS) are extracellular. Residues 128 to 148 (SIYFLYLLPPIVLEGGYFMPT) traverse the membrane as a helical segment. Residues 149–154 (RPFFEN) lie on the Cytoplasmic side of the membrane. A helical transmembrane segment spans residues 155–175 (IGSILWWAVLGALINALGIGL). Residues 176–196 (SLYLICQVKAFGLGDVNLLQN) lie on the Extracellular side of the membrane. The helical transmembrane segment at 197–217 (LLFGSLISAVDPVAVLAVFEE) threads the bilayer. Residues 218 to 226 (ARVNEQLYM) lie on the Cytoplasmic side of the membrane. A helical transmembrane segment spans residues 227 to 247 (MIFGEALLNDGITVVLYNMLI). Residues 248–270 (AFTKMHKFEDIETVDILAGCARF) lie on the Extracellular side of the membrane. Residues 271–291 (IVVGLGGVLFGIVFGFISAFI) traverse the membrane as a helical segment. Over 292 to 304 (TRFTQNISAIEPL) the chain is Cytoplasmic. The helical transmembrane segment at 305 to 325 (IVFMFSYLSYLAAETLYLSGI) threads the bilayer. The Extracellular portion of the chain corresponds to 326–356 (LAITACAVTMKKYVEENVSQTSYTTIKYFMK). An N-linked (GlcNAc...) asparagine glycan is attached at N342. The helical transmembrane segment at 357-373 (MLSSVSETLIFIFMGVS) threads the bilayer. Over 374-384 (TVGKNHEWNWA) the chain is Cytoplasmic. A helical membrane pass occupies residues 385–405 (FICFTLAFCQIWRAISVFALF). Residues 406–420 (YISNQFRTFPFSIKD) are Extracellular-facing. The segment at residues 421–441 (QCIIFYSGVRGAGSFSLAFLL) is an intramembrane region (name=L). The Extracellular portion of the chain corresponds to 442-450 (PLSLFPRKK). The chain crosses the membrane as a helical span at residues 451–471 (MFVTATLVVIYFTVFIQGITV). Residues 472–798 (GPLVRYLDVK…RSHSPLLQKK (327 aa)) are Cytoplasmic-facing. Disordered regions lie at residues 662 to 690 (PYGN…GSPS) and 776 to 798 (RWTA…LQKK). Over residues 784 to 798 (GRDHHRSHSPLLQKK) the composition is skewed to basic residues.

Belongs to the monovalent cation:proton antiporter 1 (CPA1) transporter (TC 2.A.36) family. Homodimer; each protomer has one site for sodium and one site for proton binding. Interacts with CHP1 and CHP2. In terms of processing, may be phosphorylated.

It is found in the basolateral cell membrane. Its subcellular location is the apical cell membrane. The protein resides in the zymogen granule membrane. It catalyses the reaction Na(+)(in) + H(+)(out) = Na(+)(out) + H(+)(in). The enzyme catalyses Na(+)(out) + NH4(+)(in) = Na(+)(in) + NH4(+)(out). Its function is as follows. Electroneutral antiporter that exchanges sodium for protons or ammonium ions at the basolateral membrane of epithelia to regulate cell volume and intracellular pH upon hypertonic conditions. As part of transcellular ammonia transport in renal tubules, mediates basolateral ammonium extrusion in the medullary thick ascending limb, regulating the corticopapillary ammonium gradient and overall renal acid excretion. Mediates sodium:proton exchange in gastric parietal cells secondary to cAMP-dependent acid secretion and hyperosmolarity. Possibly coupled to chloride:bicarbonate antiporter, enables loading of parietal cells with sodium and chloride ions to maintain cell volume and normal gastric acid secretion. Functions as a sodium sensor in neurons of organum vasculosum of the lamina terminalis where it regulates water intake in response to increased sodium concentration in body fluids. This is Sodium/hydrogen exchanger 4 (SLC9A4) from Homo sapiens (Human).